A 449-amino-acid chain; its full sequence is Nucleoprotein (449 aa).

Positions 1-55 (MSFTPGKQSSSRASSGNRSGNGILKWADQSDQSRNVQTRGRRVQSKQTATSQQPS) are disordered. The span at 9–22 (SSSRASSGNRSGNG) shows a compositional bias: low complexity. Composition is skewed to polar residues over residues 29–38 (QSDQSRNVQT) and 45–55 (SKQTATSQQPS). Positions 52–194 (QQPSGGTVVP…GYYIEGSGRS (143 aa)) are RNA-binding. In terms of domain architecture, CoV N NTD spans 61–190 (PYYSWFSGIT…VLPQGYYIEG (130 aa)). The RNA site is built by Arg106, Arg122, and Arg164. 3 disordered regions span residues 158-231 (PADI…VTPD), 266-297 (ILNK…NFGG), and 387-449 (MMNI…TSEI). Ser167 is modified (phosphoserine; by host). Position 174 is a phosphothreonine; by host (Thr174). Phosphoserine; by host is present on Ser191. Polar residues-rich tracts occupy residues 194-204 (SAPNSRSTSRA) and 212-227 (GSRS…STPG). Residues 259-384 (AKEVRQKILN…QNLNAYQHQE (126 aa)) form the CoV N CTD domain. Basic residues predominate over residues 266 to 276 (ILNKPRQKRSP). The dimerization stretch occupies residues 266–385 (ILNKPRQKRS…NLNAYQHQED (120 aa)). Position 391 is a phosphoserine; by host (Ser391). The span at 400–410 (QKNGQVENDNV) shows a compositional bias: polar residues. The span at 423–440 (KSRELTAEDISLLKKMDE) shows a compositional bias: basic and acidic residues. Ser424 is modified (phosphoserine; by host). Thr428 bears the Phosphothreonine; by host mark.

This sequence belongs to the betacoronavirus nucleocapsid protein family. Homooligomer. Both monomeric and oligomeric forms interact with RNA. Interacts with protein M. Interacts with NSP3; this interaction serves to tether the genome to the newly translated replicase-transcriptase complex at a very early stage of infection. ADP-ribosylated. The ADP-ribosylation is retained in the virion during infection. Post-translationally, phosphorylated on serine and threonine residues.

The protein localises to the virion. Its subcellular location is the host endoplasmic reticulum-Golgi intermediate compartment. It is found in the host Golgi apparatus. Functionally, packages the positive strand viral genome RNA into a helical ribonucleocapsid (RNP) and plays a fundamental role during virion assembly through its interactions with the viral genome and membrane protein M. Plays an important role in enhancing the efficiency of subgenomic viral RNA transcription as well as viral replication. The chain is Nucleoprotein from Sus scrofa (Pig).